The following is a 370-amino-acid chain: High affinity iron permease ftrA (370 aa).

Transmembrane regions (helical) follow at residues 5–25 (VFAV…SIIV), 52–72 (VWWG…GMIG), 88–108 (LWEG…GAAL), 148–168 (AMFL…VVFI), 179–199 (AFPL…YLLY), 206–226 (SLQI…AGLF), and 293–313 (YGSV…FVAM). The interval 335–370 (RKSAEPGNGEQDVEVSTIPSDLQTESKIPKSGASLV) is disordered. Polar residues predominate over residues 351 to 360 (TIPSDLQTES).

The protein belongs to the oxidase-dependent Fe transporter (OFeT) (TC 9.A.10.1) family.

It localises to the cell membrane. Its function is as follows. High affinity iron permease; part of the reductive iron assimilatory system (RIA), a siderophore-independent high affinity iron uptake mechanism. This is High affinity iron permease ftrA from Aspergillus fumigatus (strain ATCC MYA-4609 / CBS 101355 / FGSC A1100 / Af293) (Neosartorya fumigata).